A 288-amino-acid chain; its full sequence is MFASKLAVCSALALLAVAHAAPGGNDIQKITKAPNVPTKAEGDAASKASAPAIPPKPVNERFPHAVLFGGTCGGTIISPTWILTAGHCTLFTGGRYILAGTNNTDNPNAVTRHVKRQVIHPLFSVGPYWLDADDFNIKQVAARWDFLLAELSEPLPLDGKLMAAAKLDDQPSLPVGLNVGFGGYGTDHFGGTMRSEMHGMELAVQSDEVCSTLEQYNSKDMLCVKGRPPRFDSACNGDSGSGLVDETGRVIGVASWVENDAHSCFNGALVVFSRVASVRDWIKKVTNI.

Residues methionine 1–alanine 20 form the signal peptide. One can recognise a Peptidase S1 domain in the interval alanine 21–asparagine 287. A disordered region spans residues isoleucine 27–lysine 56. Cysteines 72 and 88 form a disulfide. Catalysis depends on charge relay system residues histidine 87 and aspartate 145. 2 disulfides stabilise this stretch: cysteine 210/cysteine 223 and cysteine 235/cysteine 264. Serine 239 serves as the catalytic Charge relay system.

The protein belongs to the peptidase S1 family.

The polypeptide is Scolexin B (Heliothis virescens (Tobacco budworm moth)).